The sequence spans 613 residues: Probable potassium transport system protein Kup 1 (613 aa).

The next 12 membrane-spanning stretches (helical) occupy residues 40–60 (VLSMLFWSMTLVVSIKYVVFV), 93–113 (MLLGLLGASMFYGDAVITPAI), 127–147 (PALQPWVLPLSLIVLVGLFLL), 158–178 (LFGPVMLFWFVLLGLIGLFSV), 201–221 (AVQAFIVFGSVFLALTGAEAL), 237–257 (WFYIAMPCLLLNYFGQGALLL), 266–286 (PFFLLMPTWAVAPTIVLATAA), 288–308 (VIASQAVISGAFSMTAQAVHL), 327–347 (IYVPVVNYALLLLVVAVVLAF), 356–376 (AYGIAVTTTMLLTTGLVTVVM), 384–404 (LPAVALLGTVFLAVDLSFFGA), and 409–429 (VAAGGWFPLLLGGLIFFLMVT).

It belongs to the HAK/KUP transporter (TC 2.A.72) family.

The protein resides in the cell inner membrane. The catalysed reaction is K(+)(in) + H(+)(in) = K(+)(out) + H(+)(out). Functionally, transport of potassium into the cell. Likely operates as a K(+):H(+) symporter. This chain is Probable potassium transport system protein Kup 1, found in Ralstonia nicotianae (strain ATCC BAA-1114 / GMI1000) (Ralstonia solanacearum).